We begin with the raw amino-acid sequence, 332 residues long: Geranylgeranyl diphosphate synthase (332 aa).

Positions 45, 48, and 77 each coordinate isopentenyl diphosphate. Residues D84 and D88 each coordinate Mg(2+). Position 93 (R93) interacts with an all-trans-polyprenyl diphosphate. R94 is a binding site for isopentenyl diphosphate. An all-trans-polyprenyl diphosphate-binding residues include K177, T178, Q215, K232, and K242.

The protein belongs to the FPP/GGPP synthase family. Mg(2+) is required as a cofactor.

It carries out the reaction isopentenyl diphosphate + (2E,6E)-farnesyl diphosphate = (2E,6E,10E)-geranylgeranyl diphosphate + diphosphate. Its pathway is isoprenoid biosynthesis; geranylgeranyl diphosphate biosynthesis; geranylgeranyl diphosphate from farnesyl diphosphate and isopentenyl diphosphate: step 1/1. Its function is as follows. Catalyzes the condensation of isopentenyl pyrophosphate with the allylic pyrophosphates to yield geranylgeranyl diphosphate (GGPP) which is a precursor of the ether-linked lipids. The sequence is that of Geranylgeranyl diphosphate synthase (gds) from Saccharolobus solfataricus (strain ATCC 35092 / DSM 1617 / JCM 11322 / P2) (Sulfolobus solfataricus).